Reading from the N-terminus, the 73-residue chain is Conotoxin Gla(3)-TxVI (73 aa).

A signal peptide spans 1-19 (MQKLIILLLVAAVLMSAQA). Positions 20-44 (VLQEKRPKEKIKFLSKRKTDAEKQQ) are excised as a propeptide. 3 disulfide bridges follow: Cys-48–Cys-62, Cys-55–Cys-66, and Cys-61–Cys-71. The residue at position 49 (Pro-49) is a 4-hydroxyproline. At Glu-53 the chain carries 4-carboxyglutamate; partial. Pro-54 bears the 4-hydroxyproline mark. Glu-60 is subject to 4-carboxyglutamate. Residue Trp-64 is modified to 6'-bromotryptophan.

This sequence belongs to the conotoxin O2 superfamily. In terms of tissue distribution, expressed by the venom duct.

It localises to the secreted. The chain is Conotoxin Gla(3)-TxVI from Conus textile (Cloth-of-gold cone).